A 37-amino-acid chain; its full sequence is MKVRASIKRICKDCKIIKRHGVNRVICINFKHKQRQG.

It belongs to the bacterial ribosomal protein bL36 family.

In Mycoplasma sp, this protein is Large ribosomal subunit protein bL36 (rpmJ).